Consider the following 179-residue polypeptide: Large ribosomal subunit protein uL5 (179 aa).

This sequence belongs to the universal ribosomal protein uL5 family. Part of the 50S ribosomal subunit; part of the 5S rRNA/L5/L18/L25 subcomplex. Contacts the 5S rRNA and the P site tRNA. Forms a bridge to the 30S subunit in the 70S ribosome.

Functionally, this is one of the proteins that bind and probably mediate the attachment of the 5S RNA into the large ribosomal subunit, where it forms part of the central protuberance. In the 70S ribosome it contacts protein S13 of the 30S subunit (bridge B1b), connecting the 2 subunits; this bridge is implicated in subunit movement. Contacts the P site tRNA; the 5S rRNA and some of its associated proteins might help stabilize positioning of ribosome-bound tRNAs. The polypeptide is Large ribosomal subunit protein uL5 (Methylococcus capsulatus (strain ATCC 33009 / NCIMB 11132 / Bath)).